The following is a 425-amino-acid chain: Serine--tRNA ligase (425 aa).

233-235 contributes to the L-serine binding site; the sequence is TAE. 264–266 contributes to the ATP binding site; that stretch reads RRE. Glutamate 287 is an L-serine binding site. 351–354 contacts ATP; that stretch reads EISS. Serine 385 contributes to the L-serine binding site.

It belongs to the class-II aminoacyl-tRNA synthetase family. Type-1 seryl-tRNA synthetase subfamily. Homodimer. The tRNA molecule binds across the dimer.

It is found in the cytoplasm. It catalyses the reaction tRNA(Ser) + L-serine + ATP = L-seryl-tRNA(Ser) + AMP + diphosphate + H(+). The catalysed reaction is tRNA(Sec) + L-serine + ATP = L-seryl-tRNA(Sec) + AMP + diphosphate + H(+). It functions in the pathway aminoacyl-tRNA biosynthesis; selenocysteinyl-tRNA(Sec) biosynthesis; L-seryl-tRNA(Sec) from L-serine and tRNA(Sec): step 1/1. Its function is as follows. Catalyzes the attachment of serine to tRNA(Ser). Is also able to aminoacylate tRNA(Sec) with serine, to form the misacylated tRNA L-seryl-tRNA(Sec), which will be further converted into selenocysteinyl-tRNA(Sec). This Prochlorococcus marinus (strain AS9601) protein is Serine--tRNA ligase.